The following is a 338-amino-acid chain: Holliday junction branch migration complex subunit RuvB (338 aa).

The segment at 4–187 (ADKDRLVSGD…FGISEHMAYY (184 aa)) is large ATPase domain (RuvB-L). ATP contacts are provided by residues L26, R27, G68, K71, T72, T73, 134–136 (EDF), R177, Y187, and R224. T72 contributes to the Mg(2+) binding site. The tract at residues 188–258 (SADDLSEIVK…MVDHALDQLQ (71 aa)) is small ATPAse domain (RuvB-S). Positions 261 to 338 (QQGLDQIDRK…AHMGMSAEQH (78 aa)) are head domain (RuvB-H). Residues R316 and R321 each coordinate DNA.

This sequence belongs to the RuvB family. In terms of assembly, homohexamer. Forms an RuvA(8)-RuvB(12)-Holliday junction (HJ) complex. HJ DNA is sandwiched between 2 RuvA tetramers; dsDNA enters through RuvA and exits via RuvB. An RuvB hexamer assembles on each DNA strand where it exits the tetramer. Each RuvB hexamer is contacted by two RuvA subunits (via domain III) on 2 adjacent RuvB subunits; this complex drives branch migration. In the full resolvosome a probable DNA-RuvA(4)-RuvB(12)-RuvC(2) complex forms which resolves the HJ.

The protein localises to the cytoplasm. The catalysed reaction is ATP + H2O = ADP + phosphate + H(+). The RuvA-RuvB-RuvC complex processes Holliday junction (HJ) DNA during genetic recombination and DNA repair, while the RuvA-RuvB complex plays an important role in the rescue of blocked DNA replication forks via replication fork reversal (RFR). RuvA specifically binds to HJ cruciform DNA, conferring on it an open structure. The RuvB hexamer acts as an ATP-dependent pump, pulling dsDNA into and through the RuvAB complex. RuvB forms 2 homohexamers on either side of HJ DNA bound by 1 or 2 RuvA tetramers; 4 subunits per hexamer contact DNA at a time. Coordinated motions by a converter formed by DNA-disengaged RuvB subunits stimulates ATP hydrolysis and nucleotide exchange. Immobilization of the converter enables RuvB to convert the ATP-contained energy into a lever motion, pulling 2 nucleotides of DNA out of the RuvA tetramer per ATP hydrolyzed, thus driving DNA branch migration. The RuvB motors rotate together with the DNA substrate, which together with the progressing nucleotide cycle form the mechanistic basis for DNA recombination by continuous HJ branch migration. Branch migration allows RuvC to scan DNA until it finds its consensus sequence, where it cleaves and resolves cruciform DNA. The polypeptide is Holliday junction branch migration complex subunit RuvB (Lacticaseibacillus paracasei (strain ATCC 334 / BCRC 17002 / CCUG 31169 / CIP 107868 / KCTC 3260 / NRRL B-441) (Lactobacillus paracasei)).